The sequence spans 88 residues: UPF0250 protein Ssed_3490 (88 aa).

The protein belongs to the UPF0250 family.

In Shewanella sediminis (strain HAW-EB3), this protein is UPF0250 protein Ssed_3490.